We begin with the raw amino-acid sequence, 507 residues long: Aromatase (507 aa).

A heme-binding site is contributed by Cys436.

Belongs to the cytochrome P450 family. It depends on heme as a cofactor.

The protein resides in the membrane. It carries out the reaction testosterone + 3 reduced [NADPH--hemoprotein reductase] + 3 O2 = 17beta-estradiol + formate + 3 oxidized [NADPH--hemoprotein reductase] + 4 H2O + 4 H(+). The enzyme catalyses androst-4-ene-3,17-dione + 3 reduced [NADPH--hemoprotein reductase] + 3 O2 = estrone + formate + 3 oxidized [NADPH--hemoprotein reductase] + 4 H2O + 4 H(+). Catalyzes the formation of aromatic C18 estrogens from C19 androgens. This is Aromatase (CYP19A1) from Gallus gallus (Chicken).